A 183-amino-acid polypeptide reads, in one-letter code: Adenine phosphoribosyltransferase (183 aa).

The protein belongs to the purine/pyrimidine phosphoribosyltransferase family. As to quaternary structure, homodimer.

The protein localises to the cytoplasm. The catalysed reaction is AMP + diphosphate = 5-phospho-alpha-D-ribose 1-diphosphate + adenine. It functions in the pathway purine metabolism; AMP biosynthesis via salvage pathway; AMP from adenine: step 1/1. Its function is as follows. Catalyzes a salvage reaction resulting in the formation of AMP, that is energically less costly than de novo synthesis. This Cronobacter sakazakii (strain ATCC BAA-894) (Enterobacter sakazakii) protein is Adenine phosphoribosyltransferase.